Consider the following 342-residue polypeptide: Gibberellin cluster GA4 desaturase (342 aa).

A disordered region spans residues 127 to 183; that stretch reads PELAPPYPMPGKSSSGSKEREAIPANELPTTRAKGFQKGEEEGPVRKPHKDWGPSGA.

The protein belongs to the asaB hydroxylase/desaturase family.

Its pathway is plant hormone biosynthesis; gibberellin biosynthesis. Its function is as follows. GA4 desaturase; part of the gene cluster that mediates the biosynthesis of gibberellins (GAs), diterpenoids that may provide a selective advantage during infection of the preferred host plant, rice. Gibberellins (GAs) are diterpenoids and are synthesized via the mevalonate pathway. Biosynthesis of the major metabolite GA3 (gibberellic acid) from geranylgeranyl diphosphate (GGPP) requires 13 steps. The GGPP produced by the geranylgeranyl diphosphate synthase GGS2 is converted to ent-kaurene via ent-copalyldiphosphate in a two-step cyclization reaction performed by the bifunctional ent-copalyl diphosphate synthase/ent-kaurene synthase enzyme (CPS/KS). Ent-Kaurene is metabolized to GAs by a series of oxidation reactions catalyzed by cytochrome P450 monooxygenases. Cytochrome P450 monooxygenase P450-4 is an ent-kaurene oxidase that catalyzes the three oxidation steps between ent-kaurene and ent-kaurenoic acid. The highly multifunctional cytochrome P450 monooxygenase P450-1 then catalyzes four steps involving oxidation at two carbon atoms, in the main pathway from ent-kaurenoic acid to GA14 via GA12-aldehyde as well as producing kaurenolides and fujenoic acids as by-products. The cytochrome P450 monooxygenase P450-2 then converts GA14 to GA4 by removal of C-20. GA4 is further converted to GA7 by the GA4 desaturase DES via 1,2-desaturation before cytochrome P450 monooxygenase P450-3, a 13-hydroxylase, hydroxylates GA7 to GA3, the final product of the GA-biosynthetic pathway. This is Gibberellin cluster GA4 desaturase from Gibberella fujikuroi (strain CBS 195.34 / IMI 58289 / NRRL A-6831) (Bakanae and foot rot disease fungus).